A 188-amino-acid chain; its full sequence is ATP synthase subunit p18, mitochondrial (188 aa).

A mitochondrion-targeting transit peptide spans 1-18; it reads MMRRVYSPVFCSVAAARF. PPR repeat units follow at residues 36–70, 75–109, and 116–146; these read TNTAPWIEKIKKCKYYDEAGEVLVNMNVSNCPPDI, ATLQCIYQSPSKQSTPVDNESKFCAMMDLLEEMQH, and NEESWTWVMKECVKSGQFRLGYCIQQVMETE.

In terms of assembly, F-type ATPases have 2 components, F(1) - the catalytic core - and F(o) - the membrane proton channel. F(1) has five subunits: alpha(3), beta(3), gamma(1), delta(1), epsilon(1), plus the additional subunit P18 (Tb427.05.1710) that is not present in F(1)F(o) ATP synthase from metazoa. Subunit P18 (Tb927.5.1710) interacts with the alpha subunit with a 1:1 stoichiometry; the interaction is direct. Subunit gamma is part of the central stalk. F(o) has three main subunits: a, b and c. The trypanosomal ATPase complex contains additional subunits that are not present in the F(1)F(o) ATP synthase from metazoa.

Its subcellular location is the mitochondrion. It is found in the mitochondrion inner membrane. In terms of biological role, mitochondrial membrane ATP synthase (F(1)F(o) ATP synthase) produces ATP from ADP in the presence of a proton gradient across the membrane which is generated by electron transport complexes of the respiratory chain. F-type ATPases consist of two structural domains, F(1) - containing the extramembraneous catalytic core, and F(o) - containing the membrane proton channel, linked together by a central stalk and a peripheral stalk. During catalysis, ATP synthesis in the catalytic domain of F(1) is coupled via a rotary mechanism of the central stalk subunits to proton translocation. Subunits alpha and beta form the catalytic core in F(1). Rotation of the central stalk against the surrounding alpha(3)beta(3) subunits leads to hydrolysis of ATP in three separate catalytic sites on the beta subunits. Contrary to the procyclic, insect form that requires F(1)F(o) ATP synthase for ATP synthesis, the bloodstream form relies on ATP hydrolysis by F(1)F(o) ATP synthase to maintain its mitochondrial membrane potential. The chain is ATP synthase subunit p18, mitochondrial from Trypanosoma brucei brucei.